The sequence spans 207 residues: High frequency lysogenization protein HflD homolog (207 aa).

This sequence belongs to the HflD family.

The protein resides in the cytoplasm. The protein localises to the cell inner membrane. The chain is High frequency lysogenization protein HflD homolog from Cellvibrio japonicus (strain Ueda107) (Pseudomonas fluorescens subsp. cellulosa).